The sequence spans 183 residues: dTTP/UTP pyrophosphatase (183 aa).

The Proton acceptor role is filled by D64.

The protein belongs to the Maf family. YhdE subfamily. A divalent metal cation is required as a cofactor.

It localises to the cytoplasm. It catalyses the reaction dTTP + H2O = dTMP + diphosphate + H(+). It carries out the reaction UTP + H2O = UMP + diphosphate + H(+). Functionally, nucleoside triphosphate pyrophosphatase that hydrolyzes dTTP and UTP. May have a dual role in cell division arrest and in preventing the incorporation of modified nucleotides into cellular nucleic acids. This Acinetobacter baylyi (strain ATCC 33305 / BD413 / ADP1) protein is dTTP/UTP pyrophosphatase.